Consider the following 215-residue polypeptide: Oligoribonuclease (215 aa).

In terms of domain architecture, Exonuclease spans 5 to 170; sequence LVWIDCEMTG…ADIHESIREL (166 aa). Residue tyrosine 127 is part of the active site. A disordered region spans residues 196 to 215; the sequence is LDEGKDAPGPSDSASAPPTG. The segment covering 202-215 has biased composition (low complexity); it reads APGPSDSASAPPTG.

The protein belongs to the oligoribonuclease family.

It localises to the cytoplasm. Functionally, 3'-to-5' exoribonuclease specific for small oligoribonucleotides. This Mycolicibacterium paratuberculosis (strain ATCC BAA-968 / K-10) (Mycobacterium paratuberculosis) protein is Oligoribonuclease.